Consider the following 289-residue polypeptide: MYB transcription factor 69 (289 aa).

HTH myb-type domains lie at 9-61 (KAGV…TNYL) and 62-116 (RPGI…KKKL). 2 consecutive DNA-binding regions (H-T-H motif) follow at residues 37–61 (WRAVPVSTGLMRCSKSCRLRWTNYL) and 89–112 (WAAIASYLPQRTDNDIKNYWNTHL). Disordered stretches follow at residues 127 to 162 (APPRPSEPTAGHADCRRHDMTRSSKDSHAACPADST) and 225 to 252 (SSAIDIDPFDHKSGGAALPPPKKRQQQQ). Basic and acidic residues predominate over residues 139-154 (ADCRRHDMTRSSKDSH).

Mainly expressed in highly lignified tissues such as vascular tissues.

It localises to the nucleus. Transcription factor that binds to the promoter of MYB31 and MYB42 and activates directly their expression, thus repressing lignin biosynthesis. This chain is MYB transcription factor 69, found in Zea mays (Maize).